The following is a 228-amino-acid chain: Claudin-10 (228 aa).

A helical transmembrane segment spans residues 1–21; that stretch reads MASTASEIIAFMVSISGWVLV. Over 22–80 the chain is Extracellular; that stretch reads SSTLPTDYWKVSTIDGTVITTATYWANLWKACVTDSTGVSNCKDFPSMLALDGYIQACR. The chain crosses the membrane as a helical span at residues 81 to 101; it reads GLMIAAVSLGFFGSIFALFGM. At 102 to 115 the chain is on the cytoplasmic side; the sequence is KCTKVGGSDKAKAK. A helical membrane pass occupies residues 116 to 136; it reads IACLAGIVFILSGLCSMTGCS. Residues 137–160 lie on the Extracellular side of the membrane; sequence LYANKITTEFFDPLFVEQKYELGA. The chain crosses the membrane as a helical span at residues 161–181; the sequence is ALFIGWAGASLCIIGGVIFCF. Residues 182–228 are Cytoplasmic-facing; sequence SISDNNKTPRYAYNGATSVMSSRTKYHGGEDFKTTNPSKQFDKNAYV.

It belongs to the claudin family. In terms of assembly, can form homodimers both in trans (interaction between CLDN10 molecules in opposing membranes) and in cis (interaction between CLDN10 molecules within one membrane). Interacts with CLDN19.

The protein resides in the cell junction. The protein localises to the tight junction. It localises to the cell membrane. The enzyme catalyses Na(+)(in) = Na(+)(out). The catalysed reaction is Li(+)(in) = Li(+)(out). It carries out the reaction K(+)(in) = K(+)(out). It catalyses the reaction Rb(+)(in) = Rb(+)(out). The enzyme catalyses Cs(+)(in) = Cs(+)(out). The catalysed reaction is NH4(+)(in) = NH4(+)(out). It carries out the reaction methylamine(out) = methylamine(in). It catalyses the reaction Mg(2+)(in) = Mg(2+)(out). The enzyme catalyses Ca(2+)(in) = Ca(2+)(out). The catalysed reaction is Sr(2+)(in) = Sr(2+)(out). It carries out the reaction chloride(in) = chloride(out). It catalyses the reaction nitrate(in) = nitrate(out). Its function is as follows. Forms paracellular channels: polymerizes in tight junction strands with cation- and anion-selective channels through the strands, conveying epithelial permeability in a process known as paracellular tight junction permeability. In sweat glands and in the thick ascending limb (TAL) of Henle's loop in kidney, it controls paracellular sodium permeability which is essential for proper sweat production and renal function. In renal proximal tubules, it conveys selective chloride over hydrogencarbonate anion permeability which is required for renal chloride reabsorption and salt homeostasis. The sequence is that of Claudin-10 (CLDN10) from Pongo abelii (Sumatran orangutan).